Consider the following 104-residue polypeptide: Phosphoribosyl-ATP pyrophosphatase (104 aa).

This sequence belongs to the PRA-PH family.

It localises to the cytoplasm. It catalyses the reaction 1-(5-phospho-beta-D-ribosyl)-ATP + H2O = 1-(5-phospho-beta-D-ribosyl)-5'-AMP + diphosphate + H(+). It functions in the pathway amino-acid biosynthesis; L-histidine biosynthesis; L-histidine from 5-phospho-alpha-D-ribose 1-diphosphate: step 2/9. The chain is Phosphoribosyl-ATP pyrophosphatase from Methanocorpusculum labreanum (strain ATCC 43576 / DSM 4855 / Z).